The primary structure comprises 149 residues: MAELTETSPETPETTEAIRAVEAFLNALQNEDFDTVDAALGDDLVYENVGFSRIRGGRRTATLLRRMQGRVGFEVKIHRIGADGAAVLTERTDALIIGPLRVQFWVCGVFEVDDGRITLWRDYFDVYDMFKGLLRGLVALVVPSLKATL.

Asp93 serves as the catalytic Proton donor. The active-site Proton acceptor is the Asp122.

It belongs to the limonene-1,2-epoxide hydrolase family. Homodimer. Is also present as monomer in solution.

It catalyses the reaction an epoxide + H2O = an ethanediol. It carries out the reaction 5,6alpha-epoxy-5alpha-cholestan-3beta-ol + H2O = 5alpha-cholestane-3beta,5,6beta-triol. The enzyme catalyses 5,6beta-epoxy-5beta-cholestan-3beta-ol + H2O = 5alpha-cholestane-3beta,5,6beta-triol. Its activity is regulated as follows. Is inhibited by the anti-epileptic drug valpromide (Ki value of about 100 uM). Functionally, epoxide hydrolase capable of hydrolyzing long or bulky lipophilic epoxides such as 9,10-epoxystearic acid and cholesterol 5,6-oxide in vitro. The physiological substrates have yet to be identified, but could be fatty acid or steroid derivatives. The polypeptide is Epoxide hydrolase EphG (ephG) (Mycobacterium tuberculosis (strain ATCC 25618 / H37Rv)).